We begin with the raw amino-acid sequence, 132 residues long: UPF0357 protein YCL012C (132 aa).

Residues 1-25 (MWDLFYFKVFFWVVLISLCIFMVHR) form the signal peptide.

It belongs to the UPF0357 family.

The protein is UPF0357 protein YCL012C (YCL012C) of Saccharomyces bayanus (Yeast).